Reading from the N-terminus, the 246-residue chain is Eukaryotic translation initiation factor 6 (246 aa).

It belongs to the eIF-6 family. In terms of assembly, monomer. Associates with the 60S ribosomal subunit.

Its subcellular location is the cytoplasm. The protein resides in the nucleus. It localises to the nucleolus. Binds to the 60S ribosomal subunit and prevents its association with the 40S ribosomal subunit to form the 80S initiation complex in the cytoplasm. May also be involved in ribosome biogenesis. Involved in miRNA-mediated gene silencing. This chain is Eukaryotic translation initiation factor 6, found in Caenorhabditis elegans.